The chain runs to 131 residues: MDDADYDNDDVGGDDFDDVDEDVDEDINQEEEADNIEIIAPGGAGGGGVPKSKRITTKYMTKYERARVLGTRALQIAMCAPIMVELDGETDPLQIAMKELKQKKIPIIIRRYLPDHSYEDWSIDELIMVDN.

Residues methionine 1–aspartate 24 form a disordered region.

It belongs to the archaeal Rpo6/eukaryotic RPB6 RNA polymerase subunit family. In terms of assembly, component of the RNA polymerase I (Pol I), RNA polymerase II (Pol II) and RNA polymerase III (Pol III) complexes consisting of at least 13, 12 and 17 subunits, respectively.

It localises to the nucleus. DNA-dependent RNA polymerases catalyze the transcription of DNA into RNA using the four ribonucleoside triphosphates as substrates. Common component of RNA polymerases I, II and III which synthesize ribosomal RNA precursors, mRNA precursors and many functional non-coding RNAs, and small RNAs, such as 5S rRNA and tRNAs, respectively. Pol II is the central component of the basal RNA polymerase II transcription machinery. Pols are composed of mobile elements that move relative to each other. In Pol II, Polr2F/RPB6 is part of the clamp element and together with parts of Polr2A/RPB1 and RPB2 forms a pocket to which the Polr2D/RPB4-Polr2G/RPB7 subcomplex binds. This is DNA-directed RNA polymerases I, II, and III subunit RPABC2 from Drosophila melanogaster (Fruit fly).